Reading from the N-terminus, the 403-residue chain is S-arrestin (403 aa).

Phosphothreonine is present on Thr-231. Residues 381–403 (RQNLKDTGENTEGKKDEDAGQDE) are disordered.

Belongs to the arrestin family. As to quaternary structure, monomer. Homodimer. Homotetramer. Interacts with RHO (via the phosphorylated C-terminus). As to expression, retina and pineal gland.

It is found in the cell projection. The protein localises to the cilium. Its subcellular location is the photoreceptor outer segment. It localises to the membrane. Binds to photoactivated, phosphorylated RHO and terminates RHO signaling via G-proteins by competing with G-proteins for the same binding site on RHO. May play a role in preventing light-dependent degeneration of retinal photoreceptor cells. In Rattus norvegicus (Rat), this protein is S-arrestin (Sag).